Reading from the N-terminus, the 101-residue chain is Phosphoribosyl-AMP cyclohydrolase (101 aa).

Mg(2+) is bound at residue Asp71. A Zn(2+)-binding site is contributed by Cys72. Asp73 and Asp75 together coordinate Mg(2+). Residues Cys88 and Cys95 each coordinate Zn(2+).

This sequence belongs to the PRA-CH family. As to quaternary structure, homodimer. It depends on Mg(2+) as a cofactor. Zn(2+) serves as cofactor.

It localises to the cytoplasm. It catalyses the reaction 1-(5-phospho-beta-D-ribosyl)-5'-AMP + H2O = 1-(5-phospho-beta-D-ribosyl)-5-[(5-phospho-beta-D-ribosylamino)methylideneamino]imidazole-4-carboxamide. Its pathway is amino-acid biosynthesis; L-histidine biosynthesis; L-histidine from 5-phospho-alpha-D-ribose 1-diphosphate: step 3/9. Catalyzes the hydrolysis of the adenine ring of phosphoribosyl-AMP. The polypeptide is Phosphoribosyl-AMP cyclohydrolase (Bacillus cereus (strain AH187)).